The following is a 137-amino-acid chain: Large ribosomal subunit protein uL16 (137 aa).

It belongs to the universal ribosomal protein uL16 family. Part of the 50S ribosomal subunit.

Functionally, binds 23S rRNA and is also seen to make contacts with the A and possibly P site tRNAs. The polypeptide is Large ribosomal subunit protein uL16 (Leuconostoc citreum (strain KM20)).